A 111-amino-acid polypeptide reads, in one-letter code: ASFBZAPAGBSASGEKIFKTKCAZCHTVBZGAGHKZGPNLHGLFGRQSGTVAGYSYSAANKNKAVNWEEKTLYDYLLNPKKYIPGTKMVFPGLKKPZZRABLLAYLKESTA.

Position 1 is an N-acetylalanine (alanine 1). Residues cysteine 22, cysteine 25, and histidine 26 each contribute to the heme c site. Lysine 80 carries the post-translational modification N6,N6,N6-trimethyllysine. Heme c is bound at residue methionine 88. Lysine 94 carries the N6,N6,N6-trimethyllysine modification.

Belongs to the cytochrome c family. In terms of processing, binds 1 heme c group covalently per subunit.

It localises to the mitochondrion intermembrane space. Functionally, electron carrier protein. The oxidized form of the cytochrome c heme group can accept an electron from the heme group of the cytochrome c1 subunit of cytochrome reductase. Cytochrome c then transfers this electron to the cytochrome oxidase complex, the final protein carrier in the mitochondrial electron-transport chain. This chain is Cytochrome c, found in Nigella damascena (Love-in-a-mist).